Here is a 1030-residue protein sequence, read N- to C-terminus: MKALFRFKSCLFDPTRRRNQLVSFSGFSKSSKSNKTRETTTTSKIQAEATAITSLFNEITEILGTDVVKLDETTRLRSHVSGAVSDNGVSVSCTEGVRQNAAMGFSGEDEKAQKVLHEEVDFSPVVHEITSVVRGDDVLVSMEDRLEKLSFRFEPEIVENVLKRCFKVPHLAMRFFNWVKQKDGFSHRVGIYNTMLSIAGEARNLDMVDELVSEMEKNGCDKDIRTWTILISVYGKAKKIGKGLLVFEKMRKSGFELDATAYNIMIRSLCIAGRGDLALEFYKEMMEKGITFGLRTYKMLLDCIAKSEKVDVVQSIADDMVRICEISEHDAFGYLLKSFCVSGKIKEALELIRELKNKEMCLDAKYFEILVKGLCRANRMVDALEIVDIMKRRKLDDSNVYGIIISGYLRQNDVSKALEQFEVIKKSGRPPRVSTYTEIMQHLFKLKQFEKGCNLFNEMIENGIEPDSVAITAVVAGHLGQNRVAEAWKVFSSMEEKGIKPTWKSYSIFVKELCRSSRYDEIIKIFNQMHASKIVIRDDIFSWVISSMEKNGEKEKIHLIKEIQKRSNSYCDELNGSGKAEFSQEEELVDDYNCPQLVQQSALPPALSAVDKMDVQEICRVLSSSRDWERTQEALEKSTVQFTPELVVEVLRHAKIQGNAVLRFFSWVGKRNGYKHNSEAYNMSIKVAGCGKDFKQMRSLFYEMRRQGCLITQDTWAIMIMQYGRTGLTNIAIRTFKEMKDMGLIPSSSTFKCLITVLCEKKGRNVEEATRTFREMIRSGFVPDRELVQDYLGCLCEVGNTKDAKSCLDSLGKIGFPVTVAYSIYIRALCRIGKLEEALSELASFEGERSLLDQYTYGSIVHGLLQRGDLQKALDKVNSMKEIGTKPGVHVYTSLIVYFFKEKQLEKVLETCQKMEGESCEPSVVTYTAMICGYMSLGKVEEAWNAFRNMEERGTSPDFKTYSKFINCLCQACKSEDALKLLSEMLDKGIAPSTINFRTVFYGLNREGKHDLARIALQKKSALVAQRTVS.

The N-terminal 77 residues, 1 to 77 (MKALFRFKSC…VKLDETTRLR (77 aa)), are a transit peptide targeting the mitochondrion. 19 PPR repeats span residues 188-222 (RVGI…GCDK), 223-257 (DIRT…GFEL), 258-292 (DATA…GITF), 293-323 (GLRT…MVRI), 328-362 (EHDA…EMCL), 363-393 (DAKY…MKRR), 397-431 (DSNV…GRPP), 432-466 (RVST…GIEP), 467-501 (DSVA…GIKP), 502-536 (TWKS…KIVI), 677-711 (NSEA…GCLI), 712-746 (TQDT…GLIP), 747-783 (SSST…GFVP), 784-814 (DREL…LGKI), 818-852 (VTVA…RSLL), 853-887 (DQYT…GTKP), 888-922 (GVHV…SCEP), 923-957 (SVVT…GTSP), and 958-992 (DFKT…GIAP).

Belongs to the PPR family. P subfamily.

It is found in the mitochondrion. The protein is Putative pentatricopeptide repeat-containing protein At5g06400, mitochondrial of Arabidopsis thaliana (Mouse-ear cress).